The primary structure comprises 492 residues: Putative sucrose transport protein SUC6 (492 aa).

A disordered region spans residues 1–26; that stretch reads MSDLQANKDAAAVNRQSSSSSADLNG. Topologically, residues 1 to 33 are cytoplasmic; the sequence is MSDLQANKDAAAVNRQSSSSSADLNGPSPMRKM. Polar residues predominate over residues 14-23; sequence NRQSSSSSAD. Ser17 carries the phosphoserine modification. Residues 34-54 form a helical membrane-spanning segment; that stretch reads ISVASIAAGIQFGWALQLSLL. Topologically, residues 55-68 are extracellular; it reads TPYVQLLGVPHKWS. The helical transmembrane segment at 69–89 threads the bilayer; sequence SFIWLCGPVSGLLVQPSVGYF. Residues 90–101 are Cytoplasmic-facing; that stretch reads SDRCKSRFGRRR. A helical membrane pass occupies residues 102–122; that stretch reads PFIAMGALLVAVAVVLIGYAA. Residues 123–139 lie on the Extracellular side of the membrane; it reads DFGHSMGDKVDEPVKMR. The helical transmembrane segment at 140–160 threads the bilayer; that stretch reads AVVIFALGFWILDVANNTLQG. At 161 to 181 the chain is on the cytoplasmic side; sequence PCRAFLGDLAAGDAKKTRTAN. A helical membrane pass occupies residues 182–202; that stretch reads AFFSFFMAVGNVLGYAAGSYT. At 203 to 224 the chain is on the extracellular side; sequence NLYKIFPFTMTKACDIYCANLK. A helical transmembrane segment spans residues 225 to 245; it reads SCFFLSITLLLVVTIIALWYV. Residues 246–277 are Cytoplasmic-facing; sequence EDKQWSPKADSDNEKTPFFGEIFGAFKVMKRP. A helical transmembrane segment spans residues 278–298; that stretch reads MWMLLIVTALNWIAWFPFLLY. Residues 299 to 324 lie on the Extracellular side of the membrane; it reads DTDWMGREVYGGDSKGDDKMKKLYNQ. A helical transmembrane segment spans residues 325-345; that stretch reads GIHVGGLGLMLNSIVLGFMSL. Topologically, residues 346–359 are cytoplasmic; sequence GIEGISRKMGGAKR. A helical membrane pass occupies residues 360-380; it reads LWGAVNIILAVCLAMTVLVTK. The Extracellular portion of the chain corresponds to 381–403; that stretch reads KAEEHRRIAGPMALPTDGIRAGA. A helical membrane pass occupies residues 404-424; it reads LTLFALLGIPLAITFSIPFAL. Topologically, residues 425 to 446 are cytoplasmic; sequence ASIISSSSGAGQGLSLGVLNMT. Residues 447–467 form a helical membrane-spanning segment; that stretch reads IVIPQMVVSFGVGPIDALFGG. Residues 468-469 are Extracellular-facing; that stretch reads GN. Residues 470 to 490 form a helical membrane-spanning segment; the sequence is LPGFVVGAIAAAISSVVAFSV. Residues 491-492 are Cytoplasmic-facing; the sequence is LP.

It belongs to the glycoside-pentoside-hexuronide (GPH) cation symporter transporter (TC 2.A.2.4) family.

Its subcellular location is the cell membrane. Its pathway is glycan biosynthesis; sucrose metabolism. In terms of biological role, may be responsible for the transport of glucosides into the cell, with the concomitant uptake of protons (symport system). Does not seem to transport sucrose. This is Putative sucrose transport protein SUC6 from Arabidopsis thaliana (Mouse-ear cress).